Here is a 575-residue protein sequence, read N- to C-terminus: Isocitrate dehydrogenase kinase/phosphatase (575 aa).

ATP-binding positions include 315-321 (APGVKGM) and Lys-336. Asp-371 is an active-site residue.

The protein belongs to the AceK family.

The protein resides in the cytoplasm. The enzyme catalyses L-seryl-[isocitrate dehydrogenase] + ATP = O-phospho-L-seryl-[isocitrate dehydrogenase] + ADP + H(+). Bifunctional enzyme which can phosphorylate or dephosphorylate isocitrate dehydrogenase (IDH) on a specific serine residue. This is a regulatory mechanism which enables bacteria to bypass the Krebs cycle via the glyoxylate shunt in response to the source of carbon. When bacteria are grown on glucose, IDH is fully active and unphosphorylated, but when grown on acetate or ethanol, the activity of IDH declines drastically concomitant with its phosphorylation. The protein is Isocitrate dehydrogenase kinase/phosphatase of Yersinia pseudotuberculosis serotype I (strain IP32953).